The sequence spans 433 residues: MFSKNRNINQFQYAMESQTEFIMYIPDAINSLIHLLDNGSIIPECFKPNLTDINGFVGNLRHLPNKITSIETGLIRQVYFHGDIMIAGSVMYLKDIETLEFICKNIGFRLSLFVEWLYDNKSLHLLESIALSFPSNDVSYLLESVMQYRQNDTTKLIFNMFPSEYNKEIILRNAVITNNLEMLEFAIEKGAILSETDHLIVQSIRTSNLDLIKYIFSHIDLSKLIKLTDTVYYIYANAVYHYSHDVIVFLIESCIDYPDDLLFKLFASNQDCHETIDYIINLKYPDQNELNNILIHICRHSSQSEKYKSVYNSVEKLIELGADFTIDNYQVVIDILKSYFPNVVEIFVKNGLNPNVNPNILKTSIYCCNNFDITKYLIDNGADIHSDPSLIKTAITSGNLKTATFLMDNGAICDESDCEIITKNRHIFDNNFS.

4 ANK repeats span residues 166 to 195, 197 to 224, 356 to 386, and 388 to 415; these read NKEI…ILSE, DHLI…LSKL, VNPN…DIHS, and PSLI…ICDE.

This chain is Putative ankyrin repeat protein R578, found in Acanthamoeba polyphaga mimivirus (APMV).